Reading from the N-terminus, the 1066-residue chain is TBC1 domain family member 31 (1066 aa).

7 WD repeats span residues 33-74 (HNTS…LHGN), 75-116 (RFNL…TVTK), 117-157 (ELVS…LDTF), 158-200 (QRKR…CDTL), 201-248 (FCKY…ARQL), 249-296 (FRII…MQTC), and 297-334 (KLLFEIGSLDEGISSSAISPHGRYIASIMENGSLNIYS). One can recognise a Rab-GAP TBC domain in the interval 424–599 (EYPTKYRMFI…KLFDNIFSNH (176 aa)). Coiled coils occupy residues 728–861 (QKQE…DLEE) and 914–948 (NKCYQEVAKLLRENRRKEIEIINAMVEEEAKKWKE). Residues 989 to 998 (CHKEEPRFQN) show a composition bias toward basic and acidic residues. Positions 989–1020 (CHKEEPRFQNEQDSSCLPRTSQLNDSSEMDPS) are disordered. Polar residues predominate over residues 999–1020 (EQDSSCLPRTSQLNDSSEMDPS). A mediates direct interaction with PJA2 region spans residues 1053-1056 (RARH).

In terms of assembly, interacts with PJA2; the interaction is direct and recruits PJA2 to centrosomes. Interacts with OFD1; regulates its activity in cilium assembly. Interacts with PRKACA.

It is found in the cytoplasm. The protein localises to the cytoskeleton. It localises to the microtubule organizing center. Its subcellular location is the centrosome. The protein resides in the centriolar satellite. It is found in the cilium basal body. Functionally, molecular adapter which is involved in cilium biogenesis. Part of a functional complex including OFD1 a centriolar protein involved in cilium assembly. Could regulate the cAMP-dependent phosphorylation of OFD1, and its subsequent ubiquitination by PJA2 which ultimately leads to its proteasomal degradation. In Homo sapiens (Human), this protein is TBC1 domain family member 31.